A 101-amino-acid chain; its full sequence is Small ribosomal subunit protein uS14 (101 aa).

It belongs to the universal ribosomal protein uS14 family. As to quaternary structure, part of the 30S ribosomal subunit. Contacts proteins S3 and S10.

Functionally, binds 16S rRNA, required for the assembly of 30S particles and may also be responsible for determining the conformation of the 16S rRNA at the A site. The polypeptide is Small ribosomal subunit protein uS14 (Haemophilus influenzae (strain 86-028NP)).